Here is a 443-residue protein sequence, read N- to C-terminus: Tubulin beta-2 chain (443 aa).

An MREI motif motif is present at residues 1–4 (MREI). GTP contacts are provided by Q11, E69, S138, G142, T143, G144, N204, and N226. E69 contributes to the Mg(2+) binding site. At E438 the chain carries 5-glutamyl polyglutamate.

It belongs to the tubulin family. Dimer of alpha and beta chains. A typical microtubule is a hollow water-filled tube with an outer diameter of 25 nm and an inner diameter of 15 nM. Alpha-beta heterodimers associate head-to-tail to form protofilaments running lengthwise along the microtubule wall with the beta-tubulin subunit facing the microtubule plus end conferring a structural polarity. Microtubules usually have 13 protofilaments but different protofilament numbers can be found in some organisms and specialized cells. Mg(2+) serves as cofactor. In terms of processing, some glutamate residues at the C-terminus are polyglycylated, resulting in polyglycine chains on the gamma-carboxyl group. Glycylation is mainly limited to tubulin incorporated into axonemes (cilia and flagella) whereas glutamylation is prevalent in neuronal cells, centrioles, axonemes, and the mitotic spindle. Both modifications can coexist on the same protein on adjacent residues, and lowering polyglycylation levels increases polyglutamylation, and reciprocally. The precise function of polyglycylation is still unclear. Post-translationally, some glutamate residues at the C-terminus are polyglutamylated, resulting in polyglutamate chains on the gamma-carboxyl group. Polyglutamylation plays a key role in microtubule severing by spastin (SPAST). SPAST preferentially recognizes and acts on microtubules decorated with short polyglutamate tails: severing activity by SPAST increases as the number of glutamates per tubulin rises from one to eight, but decreases beyond this glutamylation threshold. In terms of tissue distribution, nervous system specific.

The protein resides in the cytoplasm. The protein localises to the cytoskeleton. In terms of biological role, tubulin is the major constituent of microtubules, a cylinder consisting of laterally associated linear protofilaments composed of alpha- and beta-tubulin heterodimers. Microtubules grow by the addition of GTP-tubulin dimers to the microtubule end, where a stabilizing cap forms. Below the cap, tubulin dimers are in GDP-bound state, owing to GTPase activity of alpha-tubulin. This chain is Tubulin beta-2 chain (tubb2), found in Xenopus laevis (African clawed frog).